Here is a 277-residue protein sequence, read N- to C-terminus: Shikimate dehydrogenase (NADP(+)) (277 aa).

Residues 20–22 (SLS) and Thr67 each bind shikimate. The Proton acceptor role is filled by Lys71. Asp83 provides a ligand contact to NADP(+). Positions 92 and 107 each coordinate shikimate. NADP(+)-binding positions include 131 to 135 (GAGGV) and Ile219. Tyr221 is a binding site for shikimate. Residue Gly242 coordinates NADP(+).

It belongs to the shikimate dehydrogenase family. As to quaternary structure, homodimer.

It catalyses the reaction shikimate + NADP(+) = 3-dehydroshikimate + NADPH + H(+). The protein operates within metabolic intermediate biosynthesis; chorismate biosynthesis; chorismate from D-erythrose 4-phosphate and phosphoenolpyruvate: step 4/7. Functionally, involved in the biosynthesis of the chorismate, which leads to the biosynthesis of aromatic amino acids. Catalyzes the reversible NADPH linked reduction of 3-dehydroshikimate (DHSA) to yield shikimate (SA). This Pelobacter propionicus (strain DSM 2379 / NBRC 103807 / OttBd1) protein is Shikimate dehydrogenase (NADP(+)).